Reading from the N-terminus, the 59-residue chain is Potassium channel toxin alpha-KTx 15.2 (59 aa).

Residues 1–22 (MKFSSIILLTLLICSMSKFGNC) form the signal peptide. Q23 bears the Pyrrolidone carboxylic acid mark. Intrachain disulfides connect C30-C50, C35-C55, and C39-C57.

It belongs to the short scorpion toxin superfamily. Potassium channel inhibitor family. Alpha-KTx 15 subfamily. Expressed by the venom gland.

It localises to the secreted. Its function is as follows. Blocks both human ERG1/Kv11.1/KCNH2 potassium channels (in a reversible manner) and A-type voltage-gated potassium channels Kv4/KCND (in an irreversible manner). The presence of the Kv4-associated proteins DPP6 or DPP10 is mandatory to have high-affinity blockade of Kv4.2/KCND2 and Kv4.3/KCND3 channels. In contrast, the presence of the Kv4-associated protein KChIP1/KCNIP1 does not enhance the affinity blockade. May dispose of two functional faces (A and B); the two basic residues (Arg-40 and Lys-41) on the alpha-helix side of the peptide that blocks the hERG current (face A) and the typical dyad through which it blocks A-type currents on the beta-sheet side (face B). In adult rat brain, it binds to sites in the striatum, hippocampus, superior colliculus, and cerebellum. It shares the same target in rat brain than AaTX1 (AC Q867F4) and AmmTX3 (AC P60208). In DPP6 knockout mice, A-type currents are much less affected by the toxin than in wild-type mice. This is Potassium channel toxin alpha-KTx 15.2 from Olivierus martensii (Manchurian scorpion).